The primary structure comprises 408 residues: MVQVNGNYLKLKAGYLFPEIGRRVKAFSAANPDAALIRLGIGDVTEPLPLACREAMKTAIDAMGTAEGFHGYGPEQGYGWLREAIAKHDFQARGCDISAEEIFVSDGSKCDSSNILDILGEGNRIAVTDPVYPVYVDTNVMAGRTGEAGEEGRYGGLTYLPISADNGFAAQIPSEPVDLIYLCFPNNPTGAVATKGQLKAWVDYARSNGSLILFDAAYEAFIQDPSLPHSIFEIEGARECAIEFRSFSKNAGFTGTRCAFTVVPKGLKGTASNGEAVELWGLWNRRQSTKFNGVSYIIQRGAEAVYSDAGQAEVKGLVNFYMENAAIIRRELSGAGLTIYGGEHAPYVWIKTPEGMDSWGFFDHLLNKANVVGTPGSGFGASGEGYFRLSAFNSRANVDAAMARIKAL.

Substrate contacts are provided by Tyr15 and Gly42. Residues Tyr72, 108 to 109 (SK), Tyr132, Asn187, Tyr218, and 246 to 248 (SFS) contribute to the pyridoxal 5'-phosphate site. Positions 109, 132, and 187 each coordinate substrate. Residue Lys249 is modified to N6-(pyridoxal phosphate)lysine. Residues Arg257 and Asn292 each coordinate pyridoxal 5'-phosphate. The substrate site is built by Asn292 and Arg388.

Belongs to the class-I pyridoxal-phosphate-dependent aminotransferase family. LL-diaminopimelate aminotransferase subfamily. Homodimer. Pyridoxal 5'-phosphate is required as a cofactor.

It carries out the reaction (2S,6S)-2,6-diaminopimelate + 2-oxoglutarate = (S)-2,3,4,5-tetrahydrodipicolinate + L-glutamate + H2O + H(+). Its pathway is amino-acid biosynthesis; L-lysine biosynthesis via DAP pathway; LL-2,6-diaminopimelate from (S)-tetrahydrodipicolinate (aminotransferase route): step 1/1. Involved in the synthesis of meso-diaminopimelate (m-DAP or DL-DAP), required for both lysine and peptidoglycan biosynthesis. Catalyzes the direct conversion of tetrahydrodipicolinate to LL-diaminopimelate. In Parasynechococcus marenigrum (strain WH8102), this protein is LL-diaminopimelate aminotransferase.